A 121-amino-acid polypeptide reads, in one-letter code: Phospholipase A2 homolog EPL_00195 (121 aa).

7 disulfides stabilise this stretch: cysteine 25–cysteine 114, cysteine 27–cysteine 43, cysteine 42–cysteine 94, cysteine 48–cysteine 121, cysteine 49–cysteine 87, cysteine 56–cysteine 80, and cysteine 74–cysteine 85. Residues 104-116 form an important for membrane-damaging activities in eukaryotes and bacteria; heparin-binding region; it reads KKYRIYPNFLCRG.

Belongs to the phospholipase A2 family. Group II subfamily. S49 sub-subfamily. Monomer. Expressed by the venom gland.

It is found in the secreted. In terms of biological role, snake venom phospholipase A2 homolog that lacks enzymatic activity. Shows high myotoxin activities and displays edema-inducing activities. Has cytotoxic activities against HUVEC cells (LC(50)=2.5 uL) and human lung adenocarcinoma A549 cells (LC(50)=2.9 uL). The polypeptide is Phospholipase A2 homolog EPL_00195 (Echis pyramidum leakeyi (Leakey's carpet viper)).